We begin with the raw amino-acid sequence, 1138 residues long: Solute carrier family 12 member 5 (1138 aa).

2 disordered regions span residues Met-1–Glu-62 and Gln-96–Gln-116. Topologically, residues Met-1–Ser-98 are cytoplasmic. A compositionally biased stretch (basic and acidic residues) spans Pro-21–Pro-45. A compositionally biased stretch (polar residues) spans Lys-46–Thr-55. A Phosphothreonine modification is found at Thr-57. The segment covering Ser-98–Lys-111 has biased composition (basic and acidic residues). A discontinuously helical membrane pass occupies residues Arg-99–Met-120. Lys-113 serves as a coordination point for K(+). Residues Gly-121–Pro-129 are Extracellular-facing. A helical transmembrane segment spans residues Cys-130–Gly-151. At Ile-152 to Ser-174 the chain is on the cytoplasmic side. A helical membrane pass occupies residues Ala-175–Val-203. Chloride is bound at residue Ala-184. Residues Gly-204–Tyr-229 lie on the Extracellular side of the membrane. Transmembrane regions (helical) follow at residues Leu-230 to Leu-250 and Asn-251 to Asn-276. Over Lys-277 to Leu-402 the chain is Extracellular. A disulfide bridge connects residues Cys-310 and Cys-325. N-linked (GlcNAc...) asparagine glycosylation is found at Asn-314, Asn-333, Asn-351, and Asn-362. An intrachain disulfide couples Cys-345 to Cys-354. Residues Ala-403 to Thr-420 form a helical membrane-spanning segment. Met-410 contacts K(+). Chloride-binding residues include Tyr-414 and Val-415. At Ser-421–Ile-429 the chain is on the cytoplasmic side. The chain crosses the membrane as a helical span at residues Tyr-430–Ser-453. Position 446 (Asp-446) interacts with K(+). The Extracellular segment spans residues Ile-454–Leu-485. The helical transmembrane segment at Arg-486 to Gly-513 threads the bilayer. At Ser-514–Gln-534 the chain is on the cytoplasmic side. A run of 2 helical transmembrane segments spans residues Ala-535 to Gly-555 and Glu-556 to Asp-578. Position 569 (Glu-569) interacts with chloride. Over Glu-579–Tyr-592 the chain is Cytoplasmic. The next 2 membrane-spanning stretches (helical) occupy residues Met-593–Arg-615 and Tyr-616–Leu-632. Residues Met-633–Ser-1138 lie on the Cytoplasmic side of the membrane. The segment at Gly-667 to Leu-681 is scissor helix. Thr-929 carries the phosphothreonine; by OXSR1 and STK39 modification. The segment at His-943 to Ile-1051 is disordered. Positions Thr-945–Gly-962 are enriched in basic and acidic residues. A compositionally biased stretch (acidic residues) spans Thr-982–Val-994. Residues Ser-1001–Pro-1012 are compositionally biased toward low complexity. A compositionally biased stretch (basic and acidic residues) spans Glu-1019–Lys-1041. Thr-1029 is subject to Phosphothreonine; by OXSR1 and STK39. Phosphoserine occurs at positions 1044, 1047, and 1048.

The protein belongs to the SLC12A transporter family. K/Cl co-transporter subfamily. In terms of assembly, homodimer; adopts a domain-swap conformation at the scissor helices connecting the transmembrane domain and C-terminal domain. Heterodimer with K-Cl cotransporters SLC12A6 and SLC12A7. Interacts with AP2A1. In terms of processing, phosphorylated at Thr-929 and Thr-1029 by OXSR1/OSR1 and STK39/SPAK downstream of WNK kinases (WNK1, WNK2, WNK3 or WNK4), inhibiting the potassium-chloride cotransport activity. As to expression, expressed in brainstem, spinal cord and olfactory bulb of 17 dpc embryos. Expressed in all parts of the brain and spinal cord in postnatal day 14 mice. In terms of tissue distribution, expressed in brainstem and spinal cord of 17 dpc embryos. Expressed in all parts of the brain and spinal cord in postnatal day 14 mice.

The protein localises to the cell membrane. It is found in the cell projection. It localises to the dendrite. The catalysed reaction is K(+)(in) + chloride(in) = K(+)(out) + chloride(out). Inhibited following phosphorylation by OXSR1/OSR1 and STK39/SPAK: phosphorylation takes place downstream of WNK kinases (WNK1, WNK2, WNK3 or WNK4) in response to hyperosmotic stress and subsequent cell shrinkage. Its function is as follows. Mediates electroneutral potassium-chloride cotransport in mature neurons and is required for neuronal Cl(-) homeostasis. As major extruder of intracellular chloride, it establishes the low neuronal Cl(-) levels required for chloride influx after binding of GABA-A and glycine to their receptors, with subsequent hyperpolarization and neuronal inhibition. Involved in the regulation of dendritic spine formation and maturation. This chain is Solute carrier family 12 member 5 (Slc12a5), found in Mus musculus (Mouse).